The primary structure comprises 217 residues: MKFFVDTADTAEIADLAATGLLDGVTTNPTLIAKAGKDFIEVTKEICGLVDGPVSAEVVALDHEGMMREAEVLRKIADNVCIKVPLTVDGLKTCKALTGEGTMVNVTLCFSANQALLAAKAGATFISPFVGRHDDNGFDGMDLIRDIRLIYDNYAFETQILVASIRHGVHVLESARIGADVITAPPAVIKGLFKHVLTDKGIEGFLADWAKTGQKIV.

The active-site Schiff-base intermediate with substrate is lysine 83.

Belongs to the transaldolase family. Type 3B subfamily.

The protein localises to the cytoplasm. It carries out the reaction D-sedoheptulose 7-phosphate + D-glyceraldehyde 3-phosphate = D-erythrose 4-phosphate + beta-D-fructose 6-phosphate. The protein operates within carbohydrate degradation; pentose phosphate pathway; D-glyceraldehyde 3-phosphate and beta-D-fructose 6-phosphate from D-ribose 5-phosphate and D-xylulose 5-phosphate (non-oxidative stage): step 2/3. Functionally, transaldolase is important for the balance of metabolites in the pentose-phosphate pathway. The sequence is that of Probable transaldolase from Novosphingobium aromaticivorans (strain ATCC 700278 / DSM 12444 / CCUG 56034 / CIP 105152 / NBRC 16084 / F199).